The sequence spans 340 residues: MGSVSKTVISARGASPDDEQNGTKNGISNGSEWAKCIFLFFFLFIAGMSNWAVLAYTHDYVPRESLPDIVFSLVSEQRWASSLGDFCVALCIVMLGALLVIHQHRGTILKRVVFCAGTLYAMRSVTLAATQLPSGYTDNQGRCRDQVESEAGVFFGRLFEQTIRIGFQSKDQMLCGDLLFSGHTLVMVTCSLAVAYYLPKSIKPLQWVSHVACLIGMICMTISRTHYTIDVVIAYWLSNMVFRMYHAYCEVDMCMERRKSILYSWWPCRIVDWLEQDIVPGRLENRCQLPWRRSTPRGQERGGASAESSDSSVTMCDNITTSHHQKHVSISSSSTYPLPC.

Residues methionine 1–asparagine 25 form a disordered region. 4 helical membrane passes run cysteine 36 to tyrosine 56, serine 81 to isoleucine 101, leucine 178 to leucine 198, and isoleucine 202 to isoleucine 222. Histidine 183 is an active-site residue. At serine 223 to cysteine 340 the chain is on the cytoplasmic side. Active-site residues include histidine 226 and aspartate 230. Positions serine 294 to valine 313 are disordered.

The protein belongs to the sphingomyelin synthase family.

The protein resides in the membrane. It carries out the reaction an N-acyl-sphingoid base + a 1,2-diacyl-sn-glycero-3-phosphocholine = an N-(acyl)-sphingosylphosphocholine + a 1,2-diacyl-sn-glycerol. The catalysed reaction is an N-acylsphing-4-enine + a 1,2-diacyl-sn-glycero-3-phosphocholine = a sphingomyelin + a 1,2-diacyl-sn-glycerol. The enzyme catalyses an N-acyl-15-methylhexadecasphing-4-enine + a 1,2-diacyl-sn-glycero-3-phosphocholine = an N-acyl-15-methylhexadecasphing-4-enine-1-phosphocholine + a 1,2-diacyl-sn-glycerol. Its pathway is lipid metabolism; sphingolipid metabolism. Bidirectional lipid cholinephosphotransferase capable of converting phosphatidylcholine (PC) and ceramide to sphingomyelin (SM) and diacylglycerol (DAG) and vice versa. Direction is dependent on the relative concentrations of DAG and ceramide as phosphocholine acceptors. Directly and specifically recognizes the choline head group on the substrate. Also requires two fatty chains on the choline-P donor molecule in order to be recognized efficiently as a substrate. Does not function strictly as a SM synthase. C.elegans contains specific sphingoid bases, which are unique or different in structure compared to the sphingoid bases found in other animals. Two examples of these distinctive compounds are: 15-methylhexadecasphinganine and 15-methylhexadecasphing-4-enine. The chain is Putative phosphatidylcholine:ceramide cholinephosphotransferase 3 (sms-3) from Caenorhabditis elegans.